The following is a 465-amino-acid chain: Cysteine--tRNA ligase (465 aa).

Cysteine 27 is a binding site for Zn(2+). Residues 29–39 (PTVYNFFHIGN) carry the 'HIGH' region motif. Cysteine 207, histidine 232, and glutamate 236 together coordinate Zn(2+). The 'KMSKS' region motif lies at 264–268 (KMSKS). Lysine 267 is a binding site for ATP.

Belongs to the class-I aminoacyl-tRNA synthetase family. In terms of assembly, monomer. The cofactor is Zn(2+).

The protein localises to the cytoplasm. The enzyme catalyses tRNA(Cys) + L-cysteine + ATP = L-cysteinyl-tRNA(Cys) + AMP + diphosphate. This is Cysteine--tRNA ligase from Clostridium botulinum (strain Langeland / NCTC 10281 / Type F).